Here is a 223-residue protein sequence, read N- to C-terminus: Endonuclease NucS (223 aa).

It belongs to the NucS endonuclease family.

It is found in the cytoplasm. Cleaves both 3' and 5' ssDNA extremities of branched DNA structures. The polypeptide is Endonuclease NucS (Streptomyces avermitilis (strain ATCC 31267 / DSM 46492 / JCM 5070 / NBRC 14893 / NCIMB 12804 / NRRL 8165 / MA-4680)).